We begin with the raw amino-acid sequence, 837 residues long: Histone acetyltransferase KAT2A (837 aa).

The disordered stretch occupies residues M1 to R99. A2 is modified (N-acetylalanine). Positions A7–A51 are enriched in pro residues. Over residues T58–G74 the composition is skewed to gly residues. The span at D75–A87 shows a compositional bias: low complexity. Positions S88–R99 are enriched in basic residues. Phosphoserine is present on S307. The tract at residues F407–R434 is disordered. The span at N416–G425 shows a compositional bias: low complexity. Residues V503–N656 enclose the N-acetyltransferase domain. K549 carries the N6-acetyllysine modification. The active-site Proton donor/acceptor is E575. Acetyl-CoA is bound by residues C579–V581, Q586–T592, and Y617. Residues C579–V581, Q586–T592, and Y617 each bind succinyl-CoA. The loop 3 stretch occupies residues L639–A648. Residue K728 forms a Glycyl lysine isopeptide (Lys-Gly) (interchain with G-Cter in SUMO2) linkage. Residues K728–G832 enclose the Bromo domain. A Phosphothreonine modification is found at T735. Residues K759 and K791 each participate in a glycyl lysine isopeptide (Lys-Gly) (interchain with G-Cter in SUMO2) cross-link.

Belongs to the acetyltransferase family. GCN5 subfamily. In terms of assembly, homooligomer; may form a tetramer of homodimers. Interacts with EP300, CREBBP and ADA2. Component of the TFTC-HAT complex, at least composed of TAF5L, TAF6L, TAF3, TADA3L, SUPT3H/SPT3, TAF2/TAFII150, TAF4/TAFII135, TAF5/TAFII100, KAT2A/GCN5L2, TAF10 and TRRAP. Component of the STAGA transcription coactivator-HAT complex, at least composed of SUPT3H, KAT2A, SUPT7L, TAF5L, TAF6L, TADA3L, TAD1L, TAF10, TAF12, TRRAP and TAF9. The STAGA core complex is associated with a subcomplex required for histone deubiquitination composed of ATXN7L3, ENY2 and USP22. Component of the ADA2A-containing complex (ATAC), composed of KAT14, KAT2A, TADA2L, TADA3L, ZZ3, MBIP, WDR5, YEATS2, CCDC101 and DR1. In the complex, it probably interacts directly with KAT14, MBIP and WDR5. Interacts with PML. Interacts with CEBPB. Interacts with TACC1, TACC2 and TACC3. Interacts with RELA. Interacts with NFATC2. Interacts with TBX5. Interacts with PLK4. Associates with the 2-oxoglutarate dehydrogenase complex. Interacts with XPC; leading to KAT2A recruitment to promoters and subsequent acetylation of histones. Interacts with ERCC3/XPB; leading to KAT2A recruitment to promoters and subsequent acetylation of histones. Interacts with ISL1. Interactions of ISL1 with MLIP1 or KAT2A may be mutually exclusive. (Microbial infection) Interacts with and acetylates HIV-1 Tat. Post-translationally, acetylated at Lys-549, inhibiting the protein acetyltransferase activity. Deacetylation at Lys-549 by SIRT6 promotes phosphorylation at Ser-307 and Thr-735 and subsequent activation of the protein acetyltransferase activity, leading to acetylation and inactivation of PPARGC1A. In terms of tissue distribution, expressed in all tissues tested.

It localises to the nucleus. It is found in the chromosome. The protein localises to the cytoplasm. Its subcellular location is the cytoskeleton. The protein resides in the microtubule organizing center. It localises to the centrosome. The catalysed reaction is L-lysyl-[histone] + acetyl-CoA = N(6)-acetyl-L-lysyl-[histone] + CoA + H(+). It carries out the reaction L-lysyl-[protein] + acetyl-CoA = N(6)-acetyl-L-lysyl-[protein] + CoA + H(+). It catalyses the reaction succinyl-CoA + L-lysyl-[protein] = N(6)-succinyl-L-lysyl-[protein] + CoA + H(+). The enzyme catalyses glutaryl-CoA + L-lysyl-[protein] = N(6)-glutaryl-L-lysyl-[protein] + CoA + H(+). Protein lysine acyltransferase that can act as a acetyltransferase, glutaryltransferase, succinyltransferase or malonyltransferase, depending on the context. Acts as a histone lysine succinyltransferase: catalyzes succinylation of histone H3 on 'Lys-79' (H3K79succ), with a maximum frequency around the transcription start sites of genes. Succinylation of histones gives a specific tag for epigenetic transcription activation. Association with the 2-oxoglutarate dehydrogenase complex, which provides succinyl-CoA, is required for histone succinylation. In different complexes, functions either as an acetyltransferase (HAT) or as a succinyltransferase: in the SAGA and ATAC complexes, acts as a histone acetyltransferase. Has significant histone acetyltransferase activity with core histones, but not with nucleosome core particles. Has a a strong preference for acetylation of H3 at 'Lys-9' (H3K9ac). Acetylation of histones gives a specific tag for epigenetic transcription activation. Recruited by the XPC complex at promoters, where it specifically mediates acetylation of histone variant H2A.Z.1/H2A.Z, thereby promoting expression of target genes. Involved in long-term memory consolidation and synaptic plasticity: acts by promoting expression of a hippocampal gene expression network linked to neuroactive receptor signaling. Acts as a positive regulator of T-cell activation: upon TCR stimulation, recruited to the IL2 promoter following interaction with NFATC2 and catalyzes acetylation of histone H3 at 'Lys-9' (H3K9ac), leading to promote IL2 expression. Required for growth and differentiation of craniofacial cartilage and bone by regulating acetylation of histone H3 at 'Lys-9' (H3K9ac). Regulates embryonic stem cell (ESC) pluripotency and differentiation. Also acetylates non-histone proteins, such as CEBPB, MRE11, PPARGC1A, PLK4 and TBX5. Involved in heart and limb development by mediating acetylation of TBX5, acetylation regulating nucleocytoplasmic shuttling of TBX5. Acts as a negative regulator of centrosome amplification by mediating acetylation of PLK4. Acts as a negative regulator of gluconeogenesis by mediating acetylation and subsequent inactivation of PPARGC1A. Also acts as a histone glutaryltransferase: catalyzes glutarylation of histone H4 on 'Lys-91' (H4K91glu), a mark that destabilizes nucleosomes by promoting dissociation of the H2A-H2B dimers from nucleosomes. In terms of biological role, (Microbial infection) In case of HIV-1 infection, it is recruited by the viral protein Tat. Regulates Tat's transactivating activity and may help inducing chromatin remodeling of proviral genes. The polypeptide is Histone acetyltransferase KAT2A (Homo sapiens (Human)).